Reading from the N-terminus, the 150-residue chain is UPF0178 protein Daro_2879 (150 aa).

It belongs to the UPF0178 family.

The sequence is that of UPF0178 protein Daro_2879 from Dechloromonas aromatica (strain RCB).